The chain runs to 273 residues: MESNVPKRKEPLKSLRIKVISMGNAEVGKSCIIKRYCEKRFVSKYLATIGIDYGVTKVQVRDREIKVNIFDMAGHPFFFEVRNEFYKDTQGVILVYDVGQKDSFDALDSWLAEMKQELGPHGNMENIVFVVCANKIDCSKHRCIDESEGRLWAESRGFLYFETSAQTGEGINEMFQTFYMSIVDLCENGGKRPTANSSASYTKEQADTIRRIRTSKDSWEMLGVRPGASREEVNKAYRKLAVLLHPDKCVAPGSEDAFKAVVNARTALLKNIK.

The segment at M1 to K18 is required for interaction with MAPK1. Residues G23–S30, D71–H75, and N134–D137 each bind GTP. Residues D217–K273 enclose the J domain.

This sequence belongs to the small GTPase superfamily. Rab family. In terms of assembly, interacts directly with MAPK1 (wild-type and kinase-deficient forms). Interacts directly (in GTP-bound form) with MAP2K1 (wild-type and kinase-deficient forms).

Its subcellular location is the nucleus. Its function is as follows. GTPase which can activate the MEK/ERK pathway and induce cell transformation when overexpressed. May act as a nuclear scaffold for MAPK1, probably by association with MAPK1 nuclear export signal leading to enhanced ERK1/ERK2 signaling. This is DnaJ homolog subfamily C member 27 (Dnajc27) from Rattus norvegicus (Rat).